We begin with the raw amino-acid sequence, 613 residues long: Protein ECM3 (613 aa).

A run of 4 helical transmembrane segments spans residues 10–30 (IWAS…GFGL), 74–94 (GIIC…AFIV), 106–126 (GGIL…AYLQ), and 143–163 (VANV…LGGF). The tract at residues 177 to 256 (DEENTLTNDD…PAIDDRSSNS (80 aa)) is disordered. 2 stretches are compositionally biased toward polar residues: residues 187–206 (SAQQ…SNQD) and 213–226 (ESTV…SYIS). Ser291 and Ser338 each carry phosphoserine. The tract at residues 345-366 (RRRKSSISSQGAPSVLQADGTI) is disordered. The next 4 membrane-spanning stretches (helical) occupy residues 432–452 (MAVI…LFVT), 471–491 (FIMD…LILL), 546–566 (MLLF…LIYF), and 587–607 (FLML…SYFI).

It localises to the endoplasmic reticulum membrane. Functionally, may be involved in cell wall organization and biogenesis. The sequence is that of Protein ECM3 (ECM3) from Saccharomyces cerevisiae (strain ATCC 204508 / S288c) (Baker's yeast).